The following is a 577-amino-acid chain: MFS-type transporter pgmG (577 aa).

Residues 1–32 (MSETVTQTETDQRPATARSLGAEEKEAKSDEQ) form a disordered region. Residues 21–31 (GAEEKEAKSDE) are compositionally biased toward basic and acidic residues. 8 consecutive transmembrane segments (helical) span residues 45 to 65 (FIVIISILSSVTLYSLDNTIV), 84 to 104 (WLSVAFLVACVATNSIWSKIY), 111 to 131 (WLYLFCVVLFEVGSAMCGAAP), 141 to 161 (ALAGLGGAGLYVGVMTLLSVN), 174 to 194 (TGLTWGVGTVLGPIVGGGFAV), 218 to 238 (PLTVPPVFFAAVAIPIYLFML), 259 to 279 (LGTILMIGACVSGVMAINFGG), and 292 to 312 (CFVVSGVLFIVFGLQQWYCIG). Asparagine 317 is a glycosylation site (N-linked (GlcNAc...) asparagine). The helical transmembrane segment at 330-350 (FIILFVQTASVATVFFVPIYF) threads the bilayer. The N-linked (GlcNAc...) asparagine glycan is linked to asparagine 360. 5 consecutive transmembrane segments (helical) span residues 363–383 (AIDAGVRLLPLVCFIVAAMIL), 395–415 (MPWYLVGGCLSLVGSVLMYTI), 426–446 (GYMIILGVGGGMYAQASFAVA), 457–477 (VATGFISLAQLTGGTIALAIA), and 532–552 (ISQVYILPITGAAMSISLAIF).

This sequence belongs to the major facilitator superfamily. TCR/Tet family.

It localises to the membrane. Functionally, MFS-type transporter; part of the gene cluster that mediates the biosynthesis of pleosporalin A, ascomycone A, as well as a third cryptic naphthoquinone derived pigment, all responsible for the coloration of conidia. Seems not to be involved in pigment biosynthesis although its expression is regulated by the cluster-specific transcription factor pgmR. The protein is MFS-type transporter pgmG of Aspergillus terreus (strain NIH 2624 / FGSC A1156).